Reading from the N-terminus, the 514-residue chain is Membrane-bound lytic murein transglycosylase F (514 aa).

A signal peptide spans 1-30; that stretch reads MLSNNPLITKFRELFTVALVLALLSGCQWQ. The non-LT domain stretch occupies residues 31–271; sequence DDNLTDLEKI…QLEEKYFGHV (241 aa). The tract at residues 272-514 is LT domain; it reads GSFDYVDTRA…KTIEDPGPSQ (243 aa). Glutamate 316 is an active-site residue. A disordered region spans residues 482–514; it reads PVPPRQANVDGSLNNEAAISSAEKTIEDPGPSQ. Polar residues predominate over residues 490–499; it reads VDGSLNNEAA.

It in the N-terminal section; belongs to the bacterial solute-binding protein 3 family. This sequence in the C-terminal section; belongs to the transglycosylase Slt family.

The protein resides in the cell outer membrane. It catalyses the reaction Exolytic cleavage of the (1-&gt;4)-beta-glycosidic linkage between N-acetylmuramic acid (MurNAc) and N-acetylglucosamine (GlcNAc) residues in peptidoglycan, from either the reducing or the non-reducing ends of the peptidoglycan chains, with concomitant formation of a 1,6-anhydrobond in the MurNAc residue.. Functionally, murein-degrading enzyme that degrades murein glycan strands and insoluble, high-molecular weight murein sacculi, with the concomitant formation of a 1,6-anhydromuramoyl product. Lytic transglycosylases (LTs) play an integral role in the metabolism of the peptidoglycan (PG) sacculus. Their lytic action creates space within the PG sacculus to allow for its expansion as well as for the insertion of various structures such as secretion systems and flagella. The sequence is that of Membrane-bound lytic murein transglycosylase F from Photobacterium profundum (strain SS9).